Here is a 134-residue protein sequence, read N- to C-terminus: Small ribosomal subunit protein uS11 (134 aa).

Belongs to the universal ribosomal protein uS11 family. In terms of assembly, part of the 30S ribosomal subunit. Interacts with proteins S7 and S18. Binds to IF-3.

Located on the platform of the 30S subunit, it bridges several disparate RNA helices of the 16S rRNA. Forms part of the Shine-Dalgarno cleft in the 70S ribosome. The sequence is that of Small ribosomal subunit protein uS11 from Corynebacterium jeikeium (strain K411).